A 1441-amino-acid polypeptide reads, in one-letter code: Gag-Pol polyprotein (1441 aa).

G2 carries N-myristoyl glycine; by host lipidation. The interval 7–31 (VLSGGELDRWENIRLRPGGKKKYKL) is interaction with Gp41. The interval 8 to 43 (LSGGELDRWENIRLRPGGKKKYKLKHVVWASRELER) is interaction with host CALM1. The segment at 12–19 (ELDRWENI) is interaction with host AP3D1. Residues 14-33 (DRWENIRLRPGGKKKYKLKH) form an interaction with membrane phosphatidylinositol 4,5-bisphosphate and RNA region. The Nuclear export signal motif lies at 16 to 22 (WENIRLR). The Nuclear localization signal signature appears at 26-32 (KKKYKLK). Residues 73-77 (EELKS) form an interaction with membrane phosphatidylinositol 4,5-bisphosphate region. A disordered region spans residues 106-131 (EEQNKSKKKAQQAAADTGNRGNSSQV). Phosphotyrosine; by host is present on Y135. Positions 192–230 (NTVGGHQAAMQMLKETINEEAAEWDRLHPVHAGPITPGQ) are interaction with human PPIA/CYPA and NUP153. A dimerization/Multimerization of capsid protein p24 region spans residues 280 to 366 (YSPSSILDIR…GGPGHKARVL (87 aa)). 2 CCHC-type zinc fingers span residues 393–410 (IKCF…NCRA) and 414–431 (RGCW…DCTE). The span at 451-460 (SSEQNRANSP) shows a compositional bias: polar residues. A disordered region spans residues 451–489 (SSEQNRANSPTRRELQVWGRDNNSLSEAGEEAGDDRQGP). The interval 495 to 499 (PQITL) is dimerization of protease. The region spanning 514 to 583 (KEALLDTGAD…TPVNIIGRNL (70 aa)) is the Peptidase A2 domain. D519 serves as the catalytic For protease activity; shared with dimeric partner. 2 dimerization of protease regions span residues 543–549 (GIGGFIK) and 582–594 (NLLT…LNFP). The Reverse transcriptase domain occupies 637-827 (EGKISKIGPE…PPFLWMGYEL (191 aa)). The Mg(2+) site is built by D703, D778, and D779. Residues 820–828 (FLWMGYELH) form an RT 'primer grip' region. The Tryptophan repeat motif signature appears at 991–1007 (WETWWTEYTXATWIPEW). Residues 1027–1150 (IVGAETFYVD…VDKLVSAGIR (124 aa)) form the RNase H type-1 domain. Residues D1036, E1071, D1091, and D1142 each contribute to the Mg(2+) site. The Integrase-type zinc finger occupies 1156–1197 (DGIDKAQEDHEKYHSNWRAMASDFNLPPIVAKEIVASCDKCQ). 4 residues coordinate Zn(2+): H1165, H1169, C1193, and C1196. The 151-residue stretch at 1207-1357 (VDCSPGIWQL…SAGERIVGII (151 aa)) folds into the Integrase catalytic domain. Mg(2+)-binding residues include D1217, D1269, and E1305. Positions 1376–1423 (FRVYYRDSRDPLWKGPAKLLWKGEGAVVIQDNNDIKVVPRRKAKVIRD) form a DNA-binding region, integrase-type.

Homotrimer; further assembles as hexamers of trimers. Interacts with gp41 (via C-terminus). Interacts with host CALM1; this interaction induces a conformational change in the Matrix protein, triggering exposure of the myristate group. Interacts with host AP3D1; this interaction allows the polyprotein trafficking to multivesicular bodies during virus assembly. Part of the pre-integration complex (PIC) which is composed of viral genome, matrix protein, Vpr and integrase. As to quaternary structure, homodimer; the homodimer further multimerizes as homohexamers or homopentamers. Interacts with human PPIA/CYPA; This interaction stabilizes the capsid. Interacts with human NUP153. Interacts with host PDZD8; this interaction stabilizes the capsid. Interacts with monkey TRIM5; this interaction destabilizes the capsid. In terms of assembly, homodimer, whose active site consists of two apposed aspartic acid residues. Heterodimer of p66 RT and p51 RT (RT p66/p51). Heterodimerization of RT is essential for DNA polymerase activity. The overall folding of the subdomains is similar in p66 RT and p51 RT but the spatial arrangements of the subdomains are dramatically different. As to quaternary structure, homotetramer; may further associate as a homohexadecamer. Part of the pre-integration complex (PIC) which is composed of viral genome, matrix protein, Vpr and integrase. Interacts with human SMARCB1/INI1 and human PSIP1/LEDGF isoform 1. Interacts with human KPNA3; this interaction might play a role in nuclear import of the pre-integration complex. Interacts with human NUP153; this interaction might play a role in nuclear import of the pre-integration complex. The cofactor is Mg(2+). Post-translationally, specific enzymatic cleavages by the viral protease yield mature proteins. The protease is released by autocatalytic cleavage. The polyprotein is cleaved during and after budding, this process is termed maturation. Proteolytic cleavage of p66 RT removes the RNase H domain to yield the p51 RT subunit. Nucleocapsid protein p7 might be further cleaved after virus entry. Tyrosine phosphorylated presumably in the virion by a host kinase. Phosphorylation is apparently not a major regulator of membrane association. In terms of processing, phosphorylated possibly by host MAPK1; this phosphorylation is necessary for Pin1-mediated virion uncoating. Post-translationally, methylated by host PRMT6, impairing its function by reducing RNA annealing and the initiation of reverse transcription.

The protein resides in the host cell membrane. Its subcellular location is the host endosome. It is found in the host multivesicular body. The protein localises to the virion membrane. It localises to the host nucleus. The protein resides in the host cytoplasm. Its subcellular location is the virion. The enzyme catalyses Specific for a P1 residue that is hydrophobic, and P1' variable, but often Pro.. The catalysed reaction is Endohydrolysis of RNA in RNA/DNA hybrids. Three different cleavage modes: 1. sequence-specific internal cleavage of RNA. Human immunodeficiency virus type 1 and Moloney murine leukemia virus enzymes prefer to cleave the RNA strand one nucleotide away from the RNA-DNA junction. 2. RNA 5'-end directed cleavage 13-19 nucleotides from the RNA end. 3. DNA 3'-end directed cleavage 15-20 nucleotides away from the primer terminus.. It carries out the reaction 3'-end directed exonucleolytic cleavage of viral RNA-DNA hybrid.. It catalyses the reaction DNA(n) + a 2'-deoxyribonucleoside 5'-triphosphate = DNA(n+1) + diphosphate. Its activity is regulated as follows. Protease: The viral protease is inhibited by many synthetic protease inhibitors (PIs), such as amprenavir, atazanavir, indinavir, loprinavir, nelfinavir, ritonavir and saquinavir. Use of protease inhibitors in tritherapy regimens permit more ambitious therapeutic strategies. Reverse transcriptase/ribonuclease H: RT can be inhibited either by nucleoside RT inhibitors (NRTIs) or by non nucleoside RT inhibitors (NNRTIs). NRTIs act as chain terminators, whereas NNRTIs inhibit DNA polymerization by binding a small hydrophobic pocket near the RT active site and inducing an allosteric change in this region. Classical NRTIs are abacavir, adefovir (PMEA), didanosine (ddI), lamivudine (3TC), stavudine (d4T), tenofovir (PMPA), zalcitabine (ddC), and zidovudine (AZT). Classical NNRTIs are atevirdine (BHAP U-87201E), delavirdine, efavirenz (DMP-266), emivirine (I-EBU), and nevirapine (BI-RG-587). The tritherapies used as a basic effective treatment of AIDS associate two NRTIs and one NNRTI. Functionally, mediates, with Gag polyprotein, the essential events in virion assembly, including binding the plasma membrane, making the protein-protein interactions necessary to create spherical particles, recruiting the viral Env proteins, and packaging the genomic RNA via direct interactions with the RNA packaging sequence (Psi). Gag-Pol polyprotein may regulate its own translation, by the binding genomic RNA in the 5'-UTR. At low concentration, the polyprotein would promote translation, whereas at high concentration, the polyprotein would encapsidate genomic RNA and then shut off translation. Its function is as follows. Targets the polyprotein to the plasma membrane via a multipartite membrane-binding signal, that includes its myristoylated N-terminus. Matrix protein is part of the pre-integration complex. Implicated in the release from host cell mediated by Vpu. Binds to RNA. In terms of biological role, forms the conical core that encapsulates the genomic RNA-nucleocapsid complex in the virion. Most core are conical, with only 7% tubular. The core is constituted by capsid protein hexamer subunits. The core is disassembled soon after virion entry. Host restriction factors such as TRIM5-alpha or TRIMCyp bind retroviral capsids and cause premature capsid disassembly, leading to blocks in reverse transcription. Capsid restriction by TRIM5 is one of the factors which restricts HIV-1 to the human species. Host PIN1 apparently facilitates the virion uncoating. On the other hand, interactions with PDZD8 or CYPA stabilize the capsid. Encapsulates and protects viral dimeric unspliced genomic RNA (gRNA). Binds these RNAs through its zinc fingers. Acts as a nucleic acid chaperone which is involved in rearangement of nucleic acid secondary structure during gRNA retrotranscription. Also facilitates template switch leading to recombination. As part of the polyprotein, participates in gRNA dimerization, packaging, tRNA incorporation and virion assembly. Functionally, aspartyl protease that mediates proteolytic cleavages of Gag and Gag-Pol polyproteins during or shortly after the release of the virion from the plasma membrane. Cleavages take place as an ordered, step-wise cascade to yield mature proteins. This process is called maturation. Displays maximal activity during the budding process just prior to particle release from the cell. Also cleaves Nef and Vif, probably concomitantly with viral structural proteins on maturation of virus particles. Hydrolyzes host EIF4GI and PABP1 in order to shut off the capped cellular mRNA translation. The resulting inhibition of cellular protein synthesis serves to ensure maximal viral gene expression and to evade host immune response. Also mediates cleavage of host YTHDF3. Mediates cleavage of host CARD8, thereby activating the CARD8 inflammasome, leading to the clearance of latent HIV-1 in patient CD4(+) T-cells after viral reactivation; in contrast, HIV-1 can evade CARD8-sensing when its protease remains inactive in infected cells prior to viral budding. Its function is as follows. Multifunctional enzyme that converts the viral RNA genome into dsDNA in the cytoplasm, shortly after virus entry into the cell. This enzyme displays a DNA polymerase activity that can copy either DNA or RNA templates, and a ribonuclease H (RNase H) activity that cleaves the RNA strand of RNA-DNA heteroduplexes in a partially processive 3' to 5' endonucleasic mode. Conversion of viral genomic RNA into dsDNA requires many steps. A tRNA(3)-Lys binds to the primer-binding site (PBS) situated at the 5'-end of the viral RNA. RT uses the 3' end of the tRNA primer to perform a short round of RNA-dependent minus-strand DNA synthesis. The reading proceeds through the U5 region and ends after the repeated (R) region which is present at both ends of viral RNA. The portion of the RNA-DNA heteroduplex is digested by the RNase H, resulting in a ssDNA product attached to the tRNA primer. This ssDNA/tRNA hybridizes with the identical R region situated at the 3' end of viral RNA. This template exchange, known as minus-strand DNA strong stop transfer, can be either intra- or intermolecular. RT uses the 3' end of this newly synthesized short ssDNA to perform the RNA-dependent minus-strand DNA synthesis of the whole template. RNase H digests the RNA template except for two polypurine tracts (PPTs) situated at the 5'-end and near the center of the genome. It is not clear if both polymerase and RNase H activities are simultaneous. RNase H probably can proceed both in a polymerase-dependent (RNA cut into small fragments by the same RT performing DNA synthesis) and a polymerase-independent mode (cleavage of remaining RNA fragments by free RTs). Secondly, RT performs DNA-directed plus-strand DNA synthesis using the PPTs that have not been removed by RNase H as primers. PPTs and tRNA primers are then removed by RNase H. The 3' and 5' ssDNA PBS regions hybridize to form a circular dsDNA intermediate. Strand displacement synthesis by RT to the PBS and PPT ends produces a blunt ended, linear dsDNA copy of the viral genome that includes long terminal repeats (LTRs) at both ends. In terms of biological role, catalyzes viral DNA integration into the host chromosome, by performing a series of DNA cutting and joining reactions. This enzyme activity takes place after virion entry into a cell and reverse transcription of the RNA genome in dsDNA. The first step in the integration process is 3' processing. This step requires a complex comprising the viral genome, matrix protein, Vpr and integrase. This complex is called the pre-integration complex (PIC). The integrase protein removes 2 nucleotides from each 3' end of the viral DNA, leaving recessed CA OH's at the 3' ends. In the second step, the PIC enters cell nucleus. This process is mediated through integrase and Vpr proteins, and allows the virus to infect a non dividing cell. This ability to enter the nucleus is specific of lentiviruses, other retroviruses cannot and rely on cell division to access cell chromosomes. In the third step, termed strand transfer, the integrase protein joins the previously processed 3' ends to the 5' ends of strands of target cellular DNA at the site of integration. The 5'-ends are produced by integrase-catalyzed staggered cuts, 5 bp apart. A Y-shaped, gapped, recombination intermediate results, with the 5'-ends of the viral DNA strands and the 3' ends of target DNA strands remaining unjoined, flanking a gap of 5 bp. The last step is viral DNA integration into host chromosome. This involves host DNA repair synthesis in which the 5 bp gaps between the unjoined strands are filled in and then ligated. Since this process occurs at both cuts flanking the HIV genome, a 5 bp duplication of host DNA is produced at the ends of HIV-1 integration. Alternatively, Integrase may catalyze the excision of viral DNA just after strand transfer, this is termed disintegration. This chain is Gag-Pol polyprotein (gag-pol), found in Human immunodeficiency virus type 1 group M subtype B (isolate MN) (HIV-1).